The primary structure comprises 146 residues: Large ribosomal subunit protein uL15 (146 aa).

Positions 1–64 are disordered; the sequence is MELNSIKPAA…MPMHRRLPKR (64 aa). Positions 30-39 are enriched in basic residues; the sequence is TATKGHKGQK.

This sequence belongs to the universal ribosomal protein uL15 family. As to quaternary structure, part of the 50S ribosomal subunit.

Its function is as follows. Binds to the 23S rRNA. The polypeptide is Large ribosomal subunit protein uL15 (Geotalea daltonii (strain DSM 22248 / JCM 15807 / FRC-32) (Geobacter daltonii)).